We begin with the raw amino-acid sequence, 251 residues long: Duodenase-1 (251 aa).

Positions Met-1 to Ala-17 are cleaved as a signal peptide. The propeptide occupies Gly-18–Lys-19. The Peptidase S1 domain maps to Ile-20–Met-242. A disulfide bond links Cys-48 and Cys-64. The Charge relay system role is filled by His-63. An N-linked (GlcNAc...) asparagine glycan is attached at Asn-70. Asp-107 serves as the catalytic Charge relay system. 2 cysteine pairs are disulfide-bonded: Cys-141–Cys-207 and Cys-172–Cys-186. Catalysis depends on Ser-201, which acts as the Charge relay system.

Belongs to the peptidase S1 family. Monomer.

Protease which has both trypsin-like and chymotrypsin-like activities. Shows a preferential cleavage after Lys, Arg, Tyr, Phe, and Leu residues. This is Duodenase-1 (BDMD1) from Bos taurus (Bovine).